A 116-amino-acid chain; its full sequence is Iron-sulfur cluster insertion protein ErpA (116 aa).

Cys44, Cys108, and Cys110 together coordinate iron-sulfur cluster.

The protein belongs to the HesB/IscA family. In terms of assembly, homodimer. Requires iron-sulfur cluster as cofactor.

Required for insertion of 4Fe-4S clusters for at least IspG. This Pseudomonas putida (strain ATCC 47054 / DSM 6125 / CFBP 8728 / NCIMB 11950 / KT2440) protein is Iron-sulfur cluster insertion protein ErpA.